The primary structure comprises 282 residues: Shikimate dehydrogenase (NADP(+)) (282 aa).

Residues Ser19–Ser21 and Thr66 contribute to the shikimate site. Lys70 acts as the Proton acceptor in catalysis. Shikimate contacts are provided by Asn91 and Asp106. Residues Gly130–Ala134, Asn152–Lys157, Thr196, Met200, and Leu224 each bind NADP(+). A shikimate-binding site is contributed by Tyr226. An NADP(+)-binding site is contributed by Gly247.

This sequence belongs to the shikimate dehydrogenase family. As to quaternary structure, homodimer.

The enzyme catalyses shikimate + NADP(+) = 3-dehydroshikimate + NADPH + H(+). Its pathway is metabolic intermediate biosynthesis; chorismate biosynthesis; chorismate from D-erythrose 4-phosphate and phosphoenolpyruvate: step 4/7. Functionally, involved in the biosynthesis of the chorismate, which leads to the biosynthesis of aromatic amino acids. Catalyzes the reversible NADPH linked reduction of 3-dehydroshikimate (DHSA) to yield shikimate (SA). This is Shikimate dehydrogenase (NADP(+)) from Methanocaldococcus jannaschii (strain ATCC 43067 / DSM 2661 / JAL-1 / JCM 10045 / NBRC 100440) (Methanococcus jannaschii).